A 92-amino-acid chain; its full sequence is Small ribosomal subunit protein uS19 (92 aa).

The protein belongs to the universal ribosomal protein uS19 family.

In terms of biological role, protein S19 forms a complex with S13 that binds strongly to the 16S ribosomal RNA. This Rippkaea orientalis (strain PCC 8801 / RF-1) (Cyanothece sp. (strain PCC 8801)) protein is Small ribosomal subunit protein uS19.